A 137-amino-acid chain; its full sequence is Nucleoside diphosphate kinase (137 aa).

ATP is bound by residues K9, F57, R85, T91, R102, and N112. Catalysis depends on H115, which acts as the Pros-phosphohistidine intermediate.

This sequence belongs to the NDK family. As to quaternary structure, homotetramer. Mg(2+) is required as a cofactor.

It is found in the cytoplasm. It carries out the reaction a 2'-deoxyribonucleoside 5'-diphosphate + ATP = a 2'-deoxyribonucleoside 5'-triphosphate + ADP. It catalyses the reaction a ribonucleoside 5'-diphosphate + ATP = a ribonucleoside 5'-triphosphate + ADP. In terms of biological role, major role in the synthesis of nucleoside triphosphates other than ATP. The ATP gamma phosphate is transferred to the NDP beta phosphate via a ping-pong mechanism, using a phosphorylated active-site intermediate. The chain is Nucleoside diphosphate kinase from Aliarcobacter butzleri (strain RM4018) (Arcobacter butzleri).